Reading from the N-terminus, the 245-residue chain is tRNA pseudouridine synthase A 2 (245 aa).

Asp-53 functions as the Nucleophile in the catalytic mechanism. Tyr-111 lines the substrate pocket.

This sequence belongs to the tRNA pseudouridine synthase TruA family. In terms of assembly, homodimer.

It catalyses the reaction uridine(38/39/40) in tRNA = pseudouridine(38/39/40) in tRNA. Functionally, formation of pseudouridine at positions 38, 39 and 40 in the anticodon stem and loop of transfer RNAs. The protein is tRNA pseudouridine synthase A 2 of Bacillus thuringiensis subsp. konkukian (strain 97-27).